The chain runs to 1187 residues: Roquin-2 (1187 aa).

Zn(2+) contacts are provided by C14, C17, C33, H35, C38, C50, and D53. Residues C14–Q54 form an RING-type; degenerate zinc finger. The tract at residues E91 to H170 is HEPN-N. The tract at residues Q171–E325 is ROQ. An HEPN-C region spans residues S326 to S396. Residues K410–E438 form a C3H1-type zinc finger. Disordered stretches follow at residues V527–L571 and N640–Q677. The span at T529 to K545 shows a compositional bias: polar residues. S548 is subject to Phosphoserine. A compositionally biased stretch (polar residues) spans P553–L571. Phosphoserine occurs at positions 806, 981, and 1115.

In terms of assembly, interacts with EDC4. Interacts with CCR4-NOT deadenylase complex. Interacts with MAP3K5; the interaction is probably stimulus-dependent. Proteolytically cleaved by MALT1 in activated CD4(+) T cells; cleavage at Arg-509 is critical for promoting RC3H1 degradation in response to T-cell receptor (TCR) stimulation, and hence is necessary for prolonging the stability of a set of mRNAs controlling Th17 cell differentiation. In terms of tissue distribution, highest levels in lymph node and thymus and slightly lesser amounts in brain, lung, and spleen (at protein level). Very weak expression in heart, muscle, and kidney (at protein level). Expressed in CD4(+) helper T-cells (at protein level).

Its subcellular location is the cytoplasm. It localises to the P-body. The enzyme catalyses S-ubiquitinyl-[E2 ubiquitin-conjugating enzyme]-L-cysteine + [acceptor protein]-L-lysine = [E2 ubiquitin-conjugating enzyme]-L-cysteine + N(6)-ubiquitinyl-[acceptor protein]-L-lysine.. The protein operates within protein modification; protein ubiquitination. Binding to dsRNA, but not CDE RNA, crosstalks with the E3 ubiquitin ligase activity and may inhibit ubiquitination. Functionally, post-transcriptional repressor of mRNAs containing a conserved stem loop motif, called constitutive decay element (CDE), which is often located in the 3'-UTR, as in HMGXB3, ICOS, IER3, NFKBID, NFKBIZ, PPP1R10, TNF and in many more mRNAs. Binds to CDE and promotes mRNA deadenylation and degradation. This process does not involve miRNAs. In follicular helper T (Tfh) cells, represses of ICOS and TNFRSF4 expression, thus preventing spontaneous Tfh cell differentiation, germinal center B-cell differentiation in the absence of immunization and autoimmunity. In resting or LPS-stimulated macrophages, controls inflammation by suppressing TNF expression. Also recognizes CDE in its own mRNA and in that of paralogous RC3H1, possibly leading to feedback loop regulation. Inhibits cooperatively with ZC3H12A the differentiation of helper T cells Th17 in lungs. They repress target mRNA encoding the Th17 cell-promoting factors IL6, ICOS, REL, IRF4, NFKBID and NFKBIZ. The cooperation requires RNA-binding by RC3H1 and the nuclease activity of ZC3H12A. miRNA-binding protein that regulates microRNA homeostasis. Enhances DICER-mediated processing of pre-MIR146a but reduces mature MIR146a levels through an increase of 3' end uridylation. Both inhibits ICOS mRNA expression and they may act together to exert the suppression. Acts as a ubiquitin E3 ligase. Pairs with E2 enzymes UBE2B, UBE2D2, UBE2E2, UBE2E3, UBE2G2, UBE2K and UBE2Q2 and produces polyubiquitin chains. Shows the strongest activity when paired with UBE2N:UBE2V1 or UBE2N:UBE2V2 E2 complexes and generate both short and long polyubiquitin chains. Involved in the ubiquitination of MAP3K5. Able to interact with double-stranded RNA (dsRNA). The sequence is that of Roquin-2 (Rc3h2) from Mus musculus (Mouse).